The sequence spans 344 residues: MTECWYIPEEVADRREENRLSPNVPGSYEALSEARVFFRHFDPKEVSDDIEGFIQPLLKKLNYHSYDVVNLSPATLGDEKFEALAEQHFMEHTHEDDEVRLILEGQGYFDVRDANDKWIRLLSKPGDCIVLPAGMYHRFTTDHSKCIKTLRIFKEAPRWIALNRGPETEEKPARKEYLARLHAPAETAVGAANSHTIFSLHYPLKLDAELTVITKRLLEQHSKQPLALMIFLTGSTDPTTGASWCPDCIPAKPQVAQRFAELQGKYGEERAIFLQLPVERAGYLGNPEYPYRKHPTLQLASVPTLLVLTPTKDAKEKGDVQWYDRLEVKMRTCDIDKADVLSLE.

Fe(2+) contacts are provided by histidine 92, histidine 94, glutamate 98, and histidine 137. Ni(2+) contacts are provided by histidine 92, histidine 94, glutamate 98, and histidine 137.

It belongs to the acireductone dioxygenase (ARD) family. Requires Fe(2+) as cofactor. It depends on Ni(2+) as a cofactor.

The protein resides in the cytoplasm. It localises to the nucleus. The catalysed reaction is 1,2-dihydroxy-5-(methylsulfanyl)pent-1-en-3-one + O2 = 4-methylsulfanyl-2-oxobutanoate + formate + 2 H(+). The enzyme catalyses 1,2-dihydroxy-5-(methylsulfanyl)pent-1-en-3-one + O2 = 3-(methylsulfanyl)propanoate + CO + formate + 2 H(+). Its pathway is amino-acid biosynthesis; L-methionine biosynthesis via salvage pathway; L-methionine from S-methyl-5-thio-alpha-D-ribose 1-phosphate: step 5/6. Catalyzes 2 different reactions between oxygen and the acireductone 1,2-dihydroxy-3-keto-5-methylthiopentene (DHK-MTPene) depending upon the metal bound in the active site. Fe-containing acireductone dioxygenase (Fe-ARD) produces formate and 2-keto-4-methylthiobutyrate (KMTB), the alpha-ketoacid precursor of methionine in the methionine recycle pathway. Ni-containing acireductone dioxygenase (Ni-ARD) produces methylthiopropionate, carbon monoxide and formate, and does not lie on the methionine recycle pathway. This chain is Acireductone dioxygenase, found in Leishmania braziliensis.